Reading from the N-terminus, the 790-residue chain is Protein SEY1 (790 aa).

The Cytoplasmic portion of the chain corresponds to 1–692; the sequence is MELSEGELSH…KRSIVQHITQ (692 aa). The GB1/RHD3-type G domain occupies 55–284; that stretch reads GNNYHIISVF…VSNELFKPEY (230 aa). A GTP-binding site is contributed by 65-72; that stretch reads GSQSTGKS. The chain crosses the membrane as a helical span at residues 693-713; sequence IPYYIYLIILVLGWNEFMAII. Over 714 to 716 the chain is Lumenal; sequence RNP. A helical transmembrane segment spans residues 717-737; it reads LFFSLSIVLGATVYVLYYLGL. At 738–790 the chain is on the cytoplasmic side; it reads LRPALVVAQRTMDEVIVMAKTKLREVLIDDHEVTGRQLNKMAGSKENIELDDM.

This sequence belongs to the TRAFAC class dynamin-like GTPase superfamily. GB1/RHD3 GTPase family. RHD3 subfamily.

It is found in the endoplasmic reticulum membrane. Functionally, cooperates with the reticulon proteins and tubule-shaping DP1 family proteins to generate and maintain the structure of the tubular endoplasmic reticulum network. Has GTPase activity, which is required for its function in ER organization. Required for virulence and resistance to cycloheximide. The sequence is that of Protein SEY1 from Candida albicans (strain SC5314 / ATCC MYA-2876) (Yeast).